Reading from the N-terminus, the 456-residue chain is Putrescine--pyruvate aminotransferase (456 aa).

Tyr156 serves as a coordination point for substrate. Residue Asp262 coordinates pyridoxal 5'-phosphate. At Lys291 the chain carries N6-(pyridoxal phosphate)lysine. Residues Gly322 and Arg417 each contribute to the substrate site.

The protein belongs to the class-III pyridoxal-phosphate-dependent aminotransferase family. Requires pyridoxal 5'-phosphate as cofactor.

The catalysed reaction is putrescine + pyruvate = 4-aminobutanal + L-alanine. Its pathway is amine and polyamine degradation; putrescine degradation; 4-aminobutanal from putrescine (transaminase route). Its function is as follows. Involved in the putrescine catabolism. Catalyzes the transfer of the amino group from putrescine to pyruvate to yield 4-aminobutanal and alanine. This is Putrescine--pyruvate aminotransferase from Pseudomonas aeruginosa (strain ATCC 15692 / DSM 22644 / CIP 104116 / JCM 14847 / LMG 12228 / 1C / PRS 101 / PAO1).